The chain runs to 114 residues: Late cornified envelope protein 1D (114 aa).

A compositionally biased stretch (low complexity) spans 1–10; that stretch reads MSCQQSQQQC. Disordered regions lie at residues 1 to 21 and 75 to 114; these read MSCQ…PKCT and HHRR…GGCC. Residues 75-86 are compositionally biased toward basic residues; that stretch reads HHRRHRSHRRRP. Over residues 88–99 the composition is skewed to low complexity; it reads SSDCCSQPSGGS.

The protein belongs to the LCE family. As to quaternary structure, interacts with CYSRT1. Skin-specific. Expression was readily detected in adult trunk skin, adult arm skin, fetal skin, penal skin, vulva, esophagus and tongue. Not expressed in the cervix, rectum, lung, colon, or placenta.

Functionally, precursors of the cornified envelope of the stratum corneum. The chain is Late cornified envelope protein 1D (LCE1D) from Homo sapiens (Human).